A 221-amino-acid chain; its full sequence is tRNA (guanine-N(7)-)-methyltransferase (221 aa).

Residues Glu-43, Glu-68, and Asp-123 each coordinate S-adenosyl-L-methionine. Residue Asp-123 is part of the active site. Substrate-binding positions include Lys-127, Asp-159, and 199-202 (TEYE).

This sequence belongs to the class I-like SAM-binding methyltransferase superfamily. TrmB family.

The enzyme catalyses guanosine(46) in tRNA + S-adenosyl-L-methionine = N(7)-methylguanosine(46) in tRNA + S-adenosyl-L-homocysteine. It participates in tRNA modification; N(7)-methylguanine-tRNA biosynthesis. Its function is as follows. Catalyzes the formation of N(7)-methylguanine at position 46 (m7G46) in tRNA. The polypeptide is tRNA (guanine-N(7)-)-methyltransferase (Mycoplasma mycoides subsp. mycoides SC (strain CCUG 32753 / NCTC 10114 / PG1)).